Here is a 310-residue protein sequence, read N- to C-terminus: Very-long-chain enoyl-CoA reductase (310 aa).

Topologically, residues 1-85 are cytoplasmic; that stretch reads MPITIKSRSK…KDLGPQISWR (85 aa). A helical membrane pass occupies residues 86 to 106; sequence LVFFCEYLGPVLVHSLFYYLS. Residues 107-141 lie on the Lumenal side of the membrane; that stretch reads TIPTVVDRWHSASSDYNPFLNRVAYFLILGHYGKR. Residues 142-162 traverse the membrane as a helical segment; sequence LFETLFVHQFSLATMPIFNLF. The Cytoplasmic portion of the chain corresponds to 163 to 165; sequence KNC. A helical transmembrane segment spans residues 166–186; that stretch reads FHYWVLSGLISFGYFGYGFPF. Topologically, residues 187–201 are lumenal; sequence GNAKLFKYYSYLKLD. Residues 202 to 222 form a helical membrane-spanning segment; sequence DLSTLIGLFVLSELWNFYCHI. At 223 to 242 the chain is on the cytoplasmic side; it reads KLRLWGDYQKKHGNAKIRVP. Residues 243 to 265 traverse the membrane as a helical segment; the sequence is LNQGIFNLFVAPNYTFEVWSWIW. The Lumenal portion of the chain corresponds to 266 to 268; the sequence is FTF. A helical membrane pass occupies residues 269-291; it reads VFKFNLFAVLFLTVSTAQMYAWA. At 292-310 the chain is on the cytoplasmic side; sequence QKKNKKYHTRRAFLIPFVF.

This sequence belongs to the steroid 5-alpha reductase family. Interacts with the fatty acid elongation system components ELO2 and ELO3. Interacts with NVJ1.

Its subcellular location is the endoplasmic reticulum membrane. The catalysed reaction is a very-long-chain 2,3-saturated fatty acyl-CoA + NADP(+) = a very-long-chain (2E)-enoyl-CoA + NADPH + H(+). It catalyses the reaction octadecanoyl-CoA + NADP(+) = (2E)-octadecenoyl-CoA + NADPH + H(+). It carries out the reaction (2E)-eicosenoyl-CoA + NADPH + H(+) = eicosanoyl-CoA + NADP(+). The enzyme catalyses (2E)-docosenoyl-CoA + NADPH + H(+) = docosanoyl-CoA + NADP(+). The catalysed reaction is (2E)-tetracosenoyl-CoA + NADPH + H(+) = tetracosanoyl-CoA + NADP(+). It catalyses the reaction (2E)-hexacosenoyl-CoA + NADPH + H(+) = hexacosanoyl-CoA + NADP(+). It functions in the pathway lipid metabolism; fatty acid biosynthesis. Its function is as follows. Catalyzes the last of the four reactions of the long-chain fatty acids elongation cycle. This endoplasmic reticulum-bound enzymatic process, allows the addition of 2 carbons to the chain of long- and very long-chain fatty acids/VLCFAs per cycle. This enzyme reduces the trans-2,3-enoyl-CoA fatty acid intermediate to an acyl-CoA that can be further elongated by entering a new cycle of elongation. Thereby, it participates in the production of VLCFAs of different chain lengths that are involved in multiple biological processes as precursors of membrane lipids and lipid mediators. VLCFAs serve for instance as precursors for ceramide and sphingolipids. Required for normal biogenesis of piecemeal microautophagy of the nucleus (PMN) bleps and vesicles during nutrient stress. In Saccharomyces cerevisiae (strain ATCC 204508 / S288c) (Baker's yeast), this protein is Very-long-chain enoyl-CoA reductase (TSC13).